Consider the following 460-residue polypeptide: Cysteine--tRNA ligase (460 aa).

Cysteine 29 provides a ligand contact to Zn(2+). Positions 31 to 41 (MTVYDYMHIGH) match the 'HIGH' region motif. Residues cysteine 210, histidine 235, and glutamate 239 each contribute to the Zn(2+) site. A 'KMSKS' region motif is present at residues 267–271 (KMSKS). Position 270 (lysine 270) interacts with ATP.

Belongs to the class-I aminoacyl-tRNA synthetase family. As to quaternary structure, monomer. The cofactor is Zn(2+).

The protein resides in the cytoplasm. The catalysed reaction is tRNA(Cys) + L-cysteine + ATP = L-cysteinyl-tRNA(Cys) + AMP + diphosphate. This is Cysteine--tRNA ligase from Coxiella burnetii (strain RSA 493 / Nine Mile phase I).